The sequence spans 509 residues: tRNA-2-methylthio-N(6)-dimethylallyladenosine synthase (509 aa).

Polar residues predominate over residues 1–15 (MNEQQRLASQQANAS). Residues 1–22 (MNEQQRLASQQANASTKKEEKD) are disordered. The 119-residue stretch at 66 to 184 (RKFYIRTYGC…LPYILKDAMF (119 aa)) folds into the MTTase N-terminal domain. [4Fe-4S] cluster contacts are provided by C75, C111, C145, C221, C225, and C228. The 231-residue stretch at 207–437 (RRGDIKAWVN…NELVNEFSAK (231 aa)) folds into the Radical SAM core domain. One can recognise a TRAM domain in the interval 440–503 (KKYEGQIVEV…TWSLNGELVE (64 aa)).

The protein belongs to the methylthiotransferase family. MiaB subfamily. Monomer. [4Fe-4S] cluster serves as cofactor.

The protein resides in the cytoplasm. It catalyses the reaction N(6)-dimethylallyladenosine(37) in tRNA + (sulfur carrier)-SH + AH2 + 2 S-adenosyl-L-methionine = 2-methylsulfanyl-N(6)-dimethylallyladenosine(37) in tRNA + (sulfur carrier)-H + 5'-deoxyadenosine + L-methionine + A + S-adenosyl-L-homocysteine + 2 H(+). Functionally, catalyzes the methylthiolation of N6-(dimethylallyl)adenosine (i(6)A), leading to the formation of 2-methylthio-N6-(dimethylallyl)adenosine (ms(2)i(6)A) at position 37 in tRNAs that read codons beginning with uridine. The protein is tRNA-2-methylthio-N(6)-dimethylallyladenosine synthase of Bacillus cytotoxicus (strain DSM 22905 / CIP 110041 / 391-98 / NVH 391-98).